The chain runs to 561 residues: Arginine--tRNA ligase (561 aa).

Residues 108–118 (PNVAKEMHVGH) carry the 'HIGH' region motif.

It belongs to the class-I aminoacyl-tRNA synthetase family. In terms of assembly, monomer.

The protein localises to the cytoplasm. The catalysed reaction is tRNA(Arg) + L-arginine + ATP = L-arginyl-tRNA(Arg) + AMP + diphosphate. This Haemophilus ducreyi (strain 35000HP / ATCC 700724) protein is Arginine--tRNA ligase.